The chain runs to 353 residues: Endophilin-A1 (353 aa).

Positions 1–21 (MSVAGLKKQFHKATQKVSEKV) are membrane-binding amphipathic helix. Residues 1-27 (MSVAGLKKQFHKATQKVSEKVGGAEGT) are disordered. The segment at 1–125 (MSVAGLKKQF…DVGEAMKELS (125 aa)) is binds and tubulates liposomes. One can recognise a BAR domain in the interval 18–249 (SEKVGGAEGT…LEDRIKEASS (232 aa)). The segment at 60–87 (PNPASRAKLSMINTMSKIRGQEKGPGYP) is required for dimerization upon membrane association. Residues 181–201 (EELRQALEKFDESKEIAESSM) are a coiled coil. Positions 243–257 (RIKEASSQPKREYQP) are enriched in basic and acidic residues. A disordered region spans residues 243–290 (RIKEASSQPKREYQPKPRMSLDFTSGGDNTQHNGGISHATTPKPAGAH). Positions 264–282 (DFTSGGDNTQHNGGISHAT) are enriched in polar residues. One can recognise an SH3 domain in the interval 291 to 350 (MDQPCCRALYDFEPENEGELGFKEGDIITLTNQIDENWYEGMLHGQSGFFPINYVDILVP).

It belongs to the endophilin family. Monomer; in cytoplasm. Homodimer; when associated with membranes. Associates with MAP4K3. This interaction appears to regulate MAP4K3-mediated JNK activation. Interacts with SYNJ1 and DNM1. As to expression, highly expressed in brain.

Its subcellular location is the cytoplasm. It localises to the membrane. It is found in the early endosome. The protein localises to the presynapse. Its function is as follows. Implicated in synaptic vesicle endocytosis. May recruit other proteins to membranes with high curvature. This is Endophilin-A1 from Gallus gallus (Chicken).